The sequence spans 360 residues: Histidinol-phosphate aminotransferase (360 aa).

Lysine 222 carries the N6-(pyridoxal phosphate)lysine modification.

Belongs to the class-II pyridoxal-phosphate-dependent aminotransferase family. Histidinol-phosphate aminotransferase subfamily. In terms of assembly, homodimer. It depends on pyridoxal 5'-phosphate as a cofactor.

It carries out the reaction L-histidinol phosphate + 2-oxoglutarate = 3-(imidazol-4-yl)-2-oxopropyl phosphate + L-glutamate. It participates in amino-acid biosynthesis; L-histidine biosynthesis; L-histidine from 5-phospho-alpha-D-ribose 1-diphosphate: step 7/9. The protein is Histidinol-phosphate aminotransferase of Listeria monocytogenes serotype 4b (strain CLIP80459).